A 554-amino-acid chain; its full sequence is GPI alpha-1,2-mannosyltransferase 3 (554 aa).

An N-linked (GlcNAc...) asparagine glycan is attached at Asn-26. The next 9 membrane-spanning stretches (helical) occupy residues 63–83 (LLLF…TSFV), 136–156 (VQLL…VADV), 192–212 (LTNT…PLEG), 224–244 (LVAL…PLLF), 255–275 (DLIL…SLMI), 315–335 (GFPV…YLAP), 340–360 (ILLV…HKEF), 362–382 (FIYP…THLK), and 387–407 (PALS…GLVH). N-linked (GlcNAc...) asparagine glycosylation is present at Asn-427.

The protein belongs to the glycosyltransferase 22 family. PIGB subfamily.

The protein resides in the endoplasmic reticulum membrane. The protein operates within glycolipid biosynthesis; glycosylphosphatidylinositol-anchor biosynthesis. In terms of biological role, alpha-1,2-mannosyltransferase that catalyzes the transfer of the third mannose, via an alpha-1,2 bond, from a dolichol-phosphate-mannose (Dol-P-Man) to an alpha-D-Man-(1-&gt;6)-2-PEtn-alpha-D-Man-(1-&gt;4)-alpha-D-GlcN-(1-&gt;6)-(1-radyl,2-acyl-sn-glycero-3-phospho)-2-acyl-inositol intermediate to generate an alpha-D-Man-(1-&gt;2)-alpha-D-Man-(1-&gt;6)-2-PEtn-alpha-D-Man-(1-&gt;4)-alpha-D-GlcN-(1-&gt;6)-(1-radyl,2-acyl-sn-glycero-3-phospho)-2-acyl-inositol (also termed H6) and participates in the nineth step of the glycosylphosphatidylinositol-anchor biosynthesis. May also add the third mannose to an alpha-D-Man-(1-&gt;6)-alpha-D-Man-(1-&gt;4)-alpha-D-GlcN-(1-&gt;6)-(1-radyl,2-acyl-sn-glycero-3-phospho)-2-acyl-inositol (also termed H3) intermediate generating an alpha-D-Man-(1-&gt;2)-alpha-D-Man-(1-&gt;6)-alpha-D-Man-(1-&gt;4)-alpha-D-GlcN-(1-&gt;6)-(1-radyl,2-acyl-sn-glycero-3-phospho)-2-acyl-inositol (also termed H4). The polypeptide is GPI alpha-1,2-mannosyltransferase 3 (Homo sapiens (Human)).